The following is a 284-amino-acid chain: 2-dehydro-3-deoxyphosphooctonate aldolase (284 aa).

It belongs to the KdsA family.

It is found in the cytoplasm. It catalyses the reaction D-arabinose 5-phosphate + phosphoenolpyruvate + H2O = 3-deoxy-alpha-D-manno-2-octulosonate-8-phosphate + phosphate. Its pathway is carbohydrate biosynthesis; 3-deoxy-D-manno-octulosonate biosynthesis; 3-deoxy-D-manno-octulosonate from D-ribulose 5-phosphate: step 2/3. It participates in bacterial outer membrane biogenesis; lipopolysaccharide biosynthesis. This chain is 2-dehydro-3-deoxyphosphooctonate aldolase, found in Burkholderia vietnamiensis (strain G4 / LMG 22486) (Burkholderia cepacia (strain R1808)).